A 451-amino-acid polypeptide reads, in one-letter code: UPF0210 protein lmo0534 (451 aa).

The protein belongs to the UPF0210 family. Homodimer.

This chain is UPF0210 protein lmo0534, found in Listeria monocytogenes serovar 1/2a (strain ATCC BAA-679 / EGD-e).